A 232-amino-acid chain; its full sequence is Large ribosomal subunit protein uL1 (232 aa).

This sequence belongs to the universal ribosomal protein uL1 family. In terms of assembly, part of the 50S ribosomal subunit.

Its function is as follows. Binds directly to 23S rRNA. The L1 stalk is quite mobile in the ribosome, and is involved in E site tRNA release. Protein L1 is also a translational repressor protein, it controls the translation of the L11 operon by binding to its mRNA. This chain is Large ribosomal subunit protein uL1, found in Aromatoleum aromaticum (strain DSM 19018 / LMG 30748 / EbN1) (Azoarcus sp. (strain EbN1)).